A 444-amino-acid chain; its full sequence is Phosphoglucosamine mutase (444 aa).

Catalysis depends on S102, which acts as the Phosphoserine intermediate. S102, D241, D243, and D245 together coordinate Mg(2+). S102 bears the Phosphoserine mark.

This sequence belongs to the phosphohexose mutase family. Requires Mg(2+) as cofactor. Post-translationally, activated by phosphorylation.

It carries out the reaction alpha-D-glucosamine 1-phosphate = D-glucosamine 6-phosphate. Functionally, catalyzes the conversion of glucosamine-6-phosphate to glucosamine-1-phosphate. This Actinobacillus pleuropneumoniae serotype 7 (strain AP76) protein is Phosphoglucosamine mutase.